Reading from the N-terminus, the 411-residue chain is Glycogen synthase kinase-3 homolog MsK-2 (411 aa).

In terms of domain architecture, Protein kinase spans 74–358 (YMAERAVGQG…ALEALVHPFF (285 aa)). ATP contacts are provided by residues 80–88 (VGQGSFGVV) and lysine 103. Residue aspartate 199 is the Proton acceptor of the active site. A Phosphotyrosine modification is found at tyrosine 234.

The protein belongs to the protein kinase superfamily. CMGC Ser/Thr protein kinase family. GSK-3 subfamily. As to expression, absent in leaves and petioles while a moderate expression is seen in the stems, roots, and nodes.

The catalysed reaction is L-seryl-[protein] + ATP = O-phospho-L-seryl-[protein] + ADP + H(+). It carries out the reaction L-threonyl-[protein] + ATP = O-phospho-L-threonyl-[protein] + ADP + H(+). The sequence is that of Glycogen synthase kinase-3 homolog MsK-2 (MSK-2) from Medicago sativa (Alfalfa).